Consider the following 104-residue polypeptide: MNLQDVILTPIVTEKSQDLETIGANSKKGTRMVKYTVKVHIDANKTLIKEAFKKIFKVTPSSVNVQVYRGKIKRFRNMPAARPHWKKAIVTFRDGASIDFAKEA.

The protein belongs to the universal ribosomal protein uL23 family. Part of the 50S ribosomal subunit. Contacts protein L29, and trigger factor when it is bound to the ribosome.

Its function is as follows. One of the early assembly proteins it binds 23S rRNA. One of the proteins that surrounds the polypeptide exit tunnel on the outside of the ribosome. Forms the main docking site for trigger factor binding to the ribosome. The protein is Large ribosomal subunit protein uL23 of Leptospira interrogans serogroup Icterohaemorrhagiae serovar copenhageni (strain Fiocruz L1-130).